Reading from the N-terminus, the 596-residue chain is Leucine zipper putative tumor suppressor 1 (596 aa).

Residue glycine 2 is the site of N-myristoyl glycine attachment. Disordered stretches follow at residues 136-193 and 295-324; these read AILH…SYQL and YEER…SQKS. Basic and acidic residues predominate over residues 153–162; that stretch reads PPDKPKEQEL. Over residues 178–190 the composition is skewed to low complexity; it reads SMSSLPTHSTSSS. Positions 256 to 374 form a coiled coil; that stretch reads ISTDECSIQE…SYEREKTSFG (119 aa). The segment covering 295-310 has biased composition (basic and acidic residues); that stretch reads YEERPRRCRDELEGPE.

The protein belongs to the LZTS family. In terms of assembly, binds EEF1G, TLK2 and CDK1. Post-translationally, phosphorylated on serine residues. Hyperphosphorylated by the cAMP-dependent kinase PKA during cell-cycle progression. Highly expressed in testis, prostate, spleen, thymus, ovary and brain. Detected at lower levels in heart, placenta, small intestine, colon, liver, kidney, skeletal muscle and pancreas. Not detectable in primary tumors from breast and prostate and in many cancer cell lines.

The protein localises to the cytoplasm. Its subcellular location is the cell membrane. It is found in the cell projection. It localises to the dendritic spine. The protein resides in the postsynaptic density. The protein localises to the synapse. In terms of biological role, involved in the regulation of cell growth. May stabilize the active CDC2-cyclin B1 complex and thereby contribute to the regulation of the cell cycle and the prevention of uncontrolled cell proliferation. May act as a tumor suppressor. The sequence is that of Leucine zipper putative tumor suppressor 1 (LZTS1) from Homo sapiens (Human).